A 320-amino-acid chain; its full sequence is rRNA 2'-O-methyltransferase fibrillarin 2 (320 aa).

Residues 1-79 (MRPPLTGSGG…GRGGMKGGSK (79 aa)) are disordered. 2 stretches are compositionally biased toward gly residues: residues 7 to 44 (GSGG…GGRG) and 57 to 76 (PPRG…GMKG). Residues 167-168 (TT), 186-187 (EF), 211-212 (DA), and 231-234 (DVAQ) contribute to the S-adenosyl-L-methionine site.

The protein belongs to the methyltransferase superfamily. Fibrillarin family. Component of box C/D small nucleolar ribonucleoprotein (snoRNP) particles. Interacts with groundnut rosette virus long-distance movement protein; this interaction is required for virus long-distance movement protein transiting through host Cajal body and nucleolus, relocalization of fibrillarin to the cytoplasm, and in presence of viral RNA, leads to the formation of stable RNPs. Interacts (via GAR domain) with the hordeivirus TGB1 movement protein (via the first 82 amino acid residues). Interacts with PRMT11 and PRMT12. Interacts with MED19A. Methylated by PRMT11 and PRMT12. Expressed in roots and flowers. Expressed in leaves and stems. Expression levels decrease during aging.

Its subcellular location is the nucleus. It is found in the nucleolus. The enzyme catalyses a ribonucleotide in rRNA + S-adenosyl-L-methionine = a 2'-O-methylribonucleotide in rRNA + S-adenosyl-L-homocysteine + H(+). The catalysed reaction is L-glutaminyl-[histone H2A] + S-adenosyl-L-methionine = N(5)-methyl-L-glutaminyl-[histone H2A] + S-adenosyl-L-homocysteine + H(+). In terms of biological role, S-adenosyl-L-methionine-dependent methyltransferase that has the ability to methylate both RNAs and proteins. Involved in pre-rRNA processing. Utilizes the methyl donor S-adenosyl-L-methionine to catalyze the site-specific 2'-hydroxyl methylation of ribose moieties in pre-ribosomal RNA. Site specificity is provided by a guide RNA that base pairs with the substrate. Methylation occurs at a characteristic distance from the sequence involved in base pairing with the guide RNA. Also acts as a protein methyltransferase by mediating methylation of 'Gln-105' of histone H2A (H2AQ105me), a modification that impairs binding of the FACT complex and is specifically present at 35S ribosomal DNA locus. Acts as a negative regulator of expression of immune responsive genes, including pathogenesis-related gene 1 (PR1), and of resistance against bacterial pathogen. Binds to MED19A, a positive regulator of PR1 expression, to repress the activator activity of MED19A. In response to the bacterial pathogen-associated molecular pattern (PAMP) elf18, associates with the long non-coding RNA (lncRNA) ELENA1 (At4g16355), and releases its repression of MED19A. Possesses ribonuclease activity toward rRNA in vitro. Binds phosphoinositides, phospholipids and phosphatidic acid in vitro. The chain is rRNA 2'-O-methyltransferase fibrillarin 2 from Arabidopsis thaliana (Mouse-ear cress).